A 325-amino-acid polypeptide reads, in one-letter code: Reticulocalbin-1 (325 aa).

The signal sequence occupies residues 1 to 23; the sequence is MARGGRLGLALGLLLALVLALRA. N-linked (GlcNAc...) asparagine; partial glycosylation is present at asparagine 47. A phosphoserine mark is found at serine 49 and serine 74. EF-hand domains lie at 73–108, 109–144, 160–195, 197–232, 238–273, and 274–309; these read ESKERLGKIVDRIDSDGDGLVTTEELKLWIKRVQKR, YIYDNVAKVWKDYDRDKDEKISWEEYKQATYGYYLG, KMLPRDERRFKASDLDGDLTATREEFTAFLHPEEFE, MKEIVVLETLEDIDKNGDGFVDQDEYIADMFSHEDN, WVLSEREQFNDFRDLNKDGKLDKDEIRHWILPQDYD, and HAQAEARHLVYESDKNKDEMLTKEEILDNWNMFVGS. Residues aspartate 86, aspartate 88, aspartate 90, glutamate 97, aspartate 122, aspartate 124, aspartate 126, lysine 128, glutamate 133, aspartate 173, aspartate 175, aspartate 177, threonine 179, glutamate 184, aspartate 210, asparagine 212, aspartate 214, glutamate 221, aspartate 251, asparagine 253, aspartate 255, lysine 257, glutamate 262, aspartate 287, asparagine 289, aspartate 291, methionine 293, and glutamate 298 each coordinate Ca(2+). A Prevents secretion from ER motif is present at residues 322 to 325; the sequence is HDEL.

Belongs to the CREC family. In terms of processing, O-glycosylated. O-mannosylated by POMT1 and POMT2 and elongated by POMGNT1.

The protein resides in the endoplasmic reticulum lumen. In terms of biological role, may regulate calcium-dependent activities in the endoplasmic reticulum lumen or post-ER compartment. The sequence is that of Reticulocalbin-1 (Rcn1) from Mus musculus (Mouse).